We begin with the raw amino-acid sequence, 157 residues long: MEKVPMTARGEQLLRKELERLLKRRPLITEAIAEARELGDLKENAEYHAAREEQGICEAQIRDIEYKLSVAQVIDVSKMENNGKVIFGATVTLIDCDTEEEKTYQIVGDDEADIKSGRISVNSPIARGLIGKMEGDEVAISTPGGMKDFEIDSVEYR.

The stretch at 14-37 (LRKELERLLKRRPLITEAIAEARE) forms a coiled coil.

Belongs to the GreA/GreB family.

Its function is as follows. Necessary for efficient RNA polymerase transcription elongation past template-encoded arresting sites. The arresting sites in DNA have the property of trapping a certain fraction of elongating RNA polymerases that pass through, resulting in locked ternary complexes. Cleavage of the nascent transcript by cleavage factors such as GreA or GreB allows the resumption of elongation from the new 3'terminus. GreA releases sequences of 2 to 3 nucleotides. The polypeptide is Transcription elongation factor GreA (Vibrio vulnificus (strain CMCP6)).